The following is a 33-amino-acid chain: GCKGFGKACKYGADECCKNLVCSKKHKWCKYTL.

3 cysteine pairs are disulfide-bonded: Cys-2–Cys-17, Cys-9–Cys-22, and Cys-16–Cys-29.

The protein belongs to the neurotoxin 10 (Hwtx-1) family. Expressed by the venom gland.

Its subcellular location is the secreted. Its function is as follows. Voltage-gated sodium channel Nav1.7/SCN9A inhibitor. This is Mu-theraphotoxin-Osp1a from Orphnaecus sp. (strain Sibaliw/Philippines) (Tarantula spider).